The following is a 579-amino-acid chain: Zinc finger protein 248 (579 aa).

Residues 8–79 (VSFKDVCVDF…EKGFPSQCHP (72 aa)) form the KRAB domain. The C2H2-type 1; degenerate zinc finger occupies 240–264 (TVCKYNECGRTFIESLKLNISQRPH). Residue Lys341 forms a Glycyl lysine isopeptide (Lys-Gly) (interchain with G-Cter in SUMO2) linkage. C2H2-type zinc fingers lie at residues 380–402 (FECGECGKTFWEKSNLTQHQRTH), 408–430 (YECTECGKAFCQKPHLTNHQRTH), 436–458 (YECKQCGKTFCVKSNLTEHQRTH), 464–486 (YECNACGKSFCHRSALTVHQRTH), 492–514 (FICNECGKSFCVKSNLIVHQRTH), 520–543 (YKCNECGKTFCEKSALTKHQRTHT), and 548–570 (YECNACGKTFSQRSVLTKHQRIH).

This sequence belongs to the krueppel C2H2-type zinc-finger protein family.

The protein resides in the nucleus. In terms of biological role, may be involved in transcriptional regulation. The protein is Zinc finger protein 248 (ZNF248) of Homo sapiens (Human).